Consider the following 520-residue polypeptide: Probable alginate O-acetylase AlgI (520 aa).

Transmembrane regions (helical) follow at residues Val7–Gly24, Phe39–Ile61, Trp78–Val100, Phe115–Ile137, Asn150–Phe172, Leu239–Phe261, Leu311–Ala333, Val353–Ala375, Ala402–Leu424, and Trp483–Leu505. His322 is an active-site residue.

This sequence belongs to the membrane-bound acyltransferase family.

Its subcellular location is the cell inner membrane. The protein operates within glycan biosynthesis; alginate biosynthesis. Functionally, together with AlgJ and AlgF, forms an inner membrane complex which probably interacts with the alginate polymerization-transport complex and adds acetyl groups at the O-2 and O-3 positions of mannuronate residues. Acetylation of alginate is important for the architecture of biofilms and increases resistance to opsonic killing in the host. The polypeptide is Probable alginate O-acetylase AlgI (algI) (Pseudomonas aeruginosa (strain ATCC 15692 / DSM 22644 / CIP 104116 / JCM 14847 / LMG 12228 / 1C / PRS 101 / PAO1)).